The primary structure comprises 312 residues: Phosphoribosylaminoimidazole-succinocarboxamide synthase (312 aa).

The protein belongs to the SAICAR synthetase family.

It carries out the reaction 5-amino-1-(5-phospho-D-ribosyl)imidazole-4-carboxylate + L-aspartate + ATP = (2S)-2-[5-amino-1-(5-phospho-beta-D-ribosyl)imidazole-4-carboxamido]succinate + ADP + phosphate + 2 H(+). Its pathway is purine metabolism; IMP biosynthesis via de novo pathway; 5-amino-1-(5-phospho-D-ribosyl)imidazole-4-carboxamide from 5-amino-1-(5-phospho-D-ribosyl)imidazole-4-carboxylate: step 1/2. The polypeptide is Phosphoribosylaminoimidazole-succinocarboxamide synthase (Legionella pneumophila (strain Paris)).